The following is a 582-amino-acid chain: DNA primase (582 aa).

The segment at 40-64 (CPFHHEKTPSFTVSQKKQFYHCFGC) adopts a CHC2-type zinc-finger fold. One can recognise a Toprim domain in the interval 259 to 341 (EMLLVVEGYM…GRQLKFVFLP (83 aa)). Residues E265, D309, and D311 each contribute to the Mg(2+) site.

It belongs to the DnaG primase family. In terms of assembly, monomer. Interacts with DnaB. The cofactor is Zn(2+). Requires Mg(2+) as cofactor.

It catalyses the reaction ssDNA + n NTP = ssDNA/pppN(pN)n-1 hybrid + (n-1) diphosphate.. In terms of biological role, RNA polymerase that catalyzes the synthesis of short RNA molecules used as primers for DNA polymerase during DNA replication. This chain is DNA primase, found in Pasteurella multocida (strain Pm70).